Consider the following 21-residue polypeptide: Alpha-aminoadipic semialdehyde dehydrogenase (21 aa).

The protein belongs to the aldehyde dehydrogenase family. Homotetramer.

It carries out the reaction (S)-2-amino-6-oxohexanoate + NADP(+) + H2O = L-2-aminoadipate + NADPH + 2 H(+). The catalysed reaction is (S)-2-amino-6-oxohexanoate + NAD(+) + H2O = L-2-aminoadipate + NADH + 2 H(+). The protein is Alpha-aminoadipic semialdehyde dehydrogenase (aldh7a1) of Ctenopharyngodon idella (Grass carp).